Reading from the N-terminus, the 177-residue chain is Large ribosomal subunit protein uL6 (177 aa).

It belongs to the universal ribosomal protein uL6 family. Part of the 50S ribosomal subunit.

Its function is as follows. This protein binds to the 23S rRNA, and is important in its secondary structure. It is located near the subunit interface in the base of the L7/L12 stalk, and near the tRNA binding site of the peptidyltransferase center. In Pseudomonas syringae pv. syringae (strain B728a), this protein is Large ribosomal subunit protein uL6.